We begin with the raw amino-acid sequence, 548 residues long: Chaperonin GroEL (548 aa).

ATP-binding positions include 30-33 (TLGP), lysine 51, 87-91 (DGTTT), glycine 415, and aspartate 495.

Belongs to the chaperonin (HSP60) family. As to quaternary structure, forms a cylinder of 14 subunits composed of two heptameric rings stacked back-to-back. Interacts with the co-chaperonin GroES.

The protein resides in the cytoplasm. It carries out the reaction ATP + H2O + a folded polypeptide = ADP + phosphate + an unfolded polypeptide.. Together with its co-chaperonin GroES, plays an essential role in assisting protein folding. The GroEL-GroES system forms a nano-cage that allows encapsulation of the non-native substrate proteins and provides a physical environment optimized to promote and accelerate protein folding. This chain is Chaperonin GroEL, found in Erwinia tasmaniensis (strain DSM 17950 / CFBP 7177 / CIP 109463 / NCPPB 4357 / Et1/99).